The following is a 334-amino-acid chain: Nucleoid-associated protein PFL_1060 (334 aa).

It belongs to the YejK family.

Its subcellular location is the cytoplasm. The protein resides in the nucleoid. This is Nucleoid-associated protein PFL_1060 from Pseudomonas fluorescens (strain ATCC BAA-477 / NRRL B-23932 / Pf-5).